The following is a 142-amino-acid chain: Hemoglobin subunit alpha-A (142 aa).

Residues 2 to 142 (VLSANDKTNV…VGNVLTAKYR (141 aa)) enclose the Globin domain. Residue histidine 59 participates in O2 binding. A heme b-binding site is contributed by histidine 88.

Belongs to the globin family. In terms of assembly, heterotetramer of two alpha chains and two beta chains. In terms of tissue distribution, red blood cells.

Functionally, involved in oxygen transport from the lung to the various peripheral tissues. The protein is Hemoglobin subunit alpha-A (HBAA) of Accipiter gentilis (Northern goshawk).